A 397-amino-acid chain; its full sequence is Chorismate synthase (397 aa).

Residues arginine 40 and arginine 46 each coordinate NADP(+). Residues 129 to 131 (RSS), 257 to 258 (QA), glycine 302, 317 to 321 (KPISS), and arginine 343 each bind FMN.

This sequence belongs to the chorismate synthase family. Homotetramer. Requires FMNH2 as cofactor.

The catalysed reaction is 5-O-(1-carboxyvinyl)-3-phosphoshikimate = chorismate + phosphate. The protein operates within metabolic intermediate biosynthesis; chorismate biosynthesis; chorismate from D-erythrose 4-phosphate and phosphoenolpyruvate: step 7/7. Catalyzes the anti-1,4-elimination of the C-3 phosphate and the C-6 proR hydrogen from 5-enolpyruvylshikimate-3-phosphate (EPSP) to yield chorismate, which is the branch point compound that serves as the starting substrate for the three terminal pathways of aromatic amino acid biosynthesis. This reaction introduces a second double bond into the aromatic ring system. The polypeptide is Chorismate synthase (Chlorobaculum tepidum (strain ATCC 49652 / DSM 12025 / NBRC 103806 / TLS) (Chlorobium tepidum)).